The following is a 124-amino-acid chain: UPF0102 protein Meso_4010 (124 aa).

The protein belongs to the UPF0102 family.

This is UPF0102 protein Meso_4010 from Chelativorans sp. (strain BNC1).